The primary structure comprises 260 residues: Phosphate import ATP-binding protein PstB (260 aa).

Positions 14 to 255 (LQIRNLDFFY…PGKKQTEDYI (242 aa)) constitute an ABC transporter domain. Residue 46-53 (GPSGCGKS) coordinates ATP.

The protein belongs to the ABC transporter superfamily. Phosphate importer (TC 3.A.1.7) family. In terms of assembly, the complex is composed of two ATP-binding proteins (PstB), two transmembrane proteins (PstC and PstA) and a solute-binding protein (PstS).

It localises to the cell inner membrane. It carries out the reaction phosphate(out) + ATP + H2O = ADP + 2 phosphate(in) + H(+). Its function is as follows. Part of the ABC transporter complex PstSACB involved in phosphate import. Responsible for energy coupling to the transport system. The polypeptide is Phosphate import ATP-binding protein PstB (Thiobacillus denitrificans (strain ATCC 25259 / T1)).